A 209-amino-acid chain; its full sequence is Pyridoxal phosphate homeostasis protein (209 aa).

An N6-(pyridoxal phosphate)lysine modification is found at lysine 31.

It belongs to the pyridoxal phosphate-binding protein YggS/PROSC family.

In terms of biological role, pyridoxal 5'-phosphate (PLP)-binding protein, which is involved in PLP homeostasis. The protein is Pyridoxal phosphate homeostasis protein of Deinococcus radiodurans (strain ATCC 13939 / DSM 20539 / JCM 16871 / CCUG 27074 / LMG 4051 / NBRC 15346 / NCIMB 9279 / VKM B-1422 / R1).